The primary structure comprises 194 residues: Probable GTP-binding protein EngB (194 aa).

The region spanning 22–194 (DLPEFALAGR…KFWDWIEDKM (173 aa)) is the EngB-type G domain. GTP is bound by residues 30-37 (GRSNVGKS), 57-61 (GKTQT), 75-78 (DVPG), 142-145 (TKMD), and 175-177 (FSS). Mg(2+)-binding residues include S37 and T59.

It belongs to the TRAFAC class TrmE-Era-EngA-EngB-Septin-like GTPase superfamily. EngB GTPase family. The cofactor is Mg(2+).

In terms of biological role, necessary for normal cell division and for the maintenance of normal septation. In Lactobacillus gasseri (strain ATCC 33323 / DSM 20243 / BCRC 14619 / CIP 102991 / JCM 1131 / KCTC 3163 / NCIMB 11718 / NCTC 13722 / AM63), this protein is Probable GTP-binding protein EngB.